A 599-amino-acid polypeptide reads, in one-letter code: Elongation factor 4 (599 aa).

Positions 5 to 187 (DLIRNFSIVA…AIVTRLPPPK (183 aa)) constitute a tr-type G domain. GTP contacts are provided by residues 17–22 (DHGKST) and 134–137 (NKID).

Belongs to the TRAFAC class translation factor GTPase superfamily. Classic translation factor GTPase family. LepA subfamily.

The protein localises to the cell inner membrane. The catalysed reaction is GTP + H2O = GDP + phosphate + H(+). Its function is as follows. Required for accurate and efficient protein synthesis under certain stress conditions. May act as a fidelity factor of the translation reaction, by catalyzing a one-codon backward translocation of tRNAs on improperly translocated ribosomes. Back-translocation proceeds from a post-translocation (POST) complex to a pre-translocation (PRE) complex, thus giving elongation factor G a second chance to translocate the tRNAs correctly. Binds to ribosomes in a GTP-dependent manner. The protein is Elongation factor 4 of Cereibacter sphaeroides (strain ATCC 17025 / ATH 2.4.3) (Rhodobacter sphaeroides).